The sequence spans 358 residues: MRATPLAAPAGSLSRKKRLELDDNLDTERPVQKRARSGPQPRLPPCLLPLSPPTAPDRATAVATASRLGPYVLLEPEEGGRAYQALHCPTGTEYTCKVYPVQEALAVLEPYARLPPHKHVARPTEVLAGTQLLYAFFTRTHGDMHSLVRSRHRIPEPEAAVLFRQMATALAHCHQHGLVLRDLKLCRFVFADRERKKLVLENLEDSCVLTGPDDSLWDKHACPAYVGPEILSSRASYSGKAADVWSLGVALFTMLAGHYPFQDSEPVLLFGKIRRGAYALPAGLSAPARCLVRCLLRREPAERLTATGILLHPWLRQDPMPLAPTRSHLWEAAQVVPDGLGLDEAREEEGDREVVLYG.

Positions 1-54 (MRATPLAAPAGSLSRKKRLELDDNLDTERPVQKRARSGPQPRLPPCLLPLSPPT) are disordered. Positions 1–127 (MRATPLAAPA…KHVARPTEVL (127 aa)) are interaction with DDIT3/CHOP. S12 is modified (phosphoserine). Residues 41 to 54 (PRLPPCLLPLSPPT) are compositionally biased toward pro residues. A Protein kinase domain is found at 68–316 (LGPYVLLEPE…TGILLHPWLR (249 aa)).

This sequence belongs to the protein kinase superfamily. CAMK Ser/Thr protein kinase family. Tribbles subfamily. As to quaternary structure, interacts with AKT1, AKT2, MAP2K1 and MAP2K7. Interacts with ATF4. Interacts with DDIT3/CHOP and inhibits its interaction with EP300/P300. Interacts with APOBEC3C. Interacts (via N-terminus) with APOBEC3A. Interacts with RELA. Highest expression in liver, pancreas, peripheral blood leukocytes and bone marrow. Also highly expressed in a number of primary lung, colon and breast tumors. Expressed in spleen, thymus, and prostate and is undetectable in other examined tissues, including testis, ovary, small intestine, colon, leukocyte, heart, brain, placenta, lung, skeletal muscle, and kidney.

It is found in the nucleus. Functionally, inactive protein kinase which acts as a regulator of the integrated stress response (ISR), a process for adaptation to various stress. Inhibits the transcriptional activity of DDIT3/CHOP and is involved in DDIT3/CHOP-dependent cell death during ER stress. May play a role in programmed neuronal cell death but does not appear to affect non-neuronal cells. Acts as a negative feedback regulator of the ATF4-dependent transcription during the ISR: while TRIB3 expression is promoted by ATF4, TRIB3 protein interacts with ATF4 and inhibits ATF4 transcription activity. Disrupts insulin signaling by binding directly to Akt kinases and blocking their activation. May bind directly to and mask the 'Thr-308' phosphorylation site in AKT1. Interacts with the NF-kappa-B transactivator p65 RELA and inhibits its phosphorylation and thus its transcriptional activation activity. Interacts with MAPK kinases and regulates activation of MAP kinases. Can inhibit APOBEC3A editing of nuclear DNA. This is Tribbles homolog 3 (TRIB3) from Homo sapiens (Human).